The chain runs to 487 residues: ESCRT-I complex subunit vps23 (487 aa).

The region spanning 428–487 (SERELKYYELKRKDEKLDEGIRALNQALHHESIMPASWLKGIKLLARQQFLIRDEMLQYS) is the SB domain.

Component of the ESCRT-I complex (endosomal sorting complex required for transport I).

The protein resides in the cytoplasm. The protein localises to the endosome. It is found in the late endosome membrane. Component of the ESCRT-I complex, a regulator of vesicular trafficking process. Binds to ubiquitinated cargo proteins and is required for the sorting of endocytic ubiquitinated cargos into multivesicular bodies (MVBs). Mediates the association to the ESCRT-0 complex. The protein is ESCRT-I complex subunit vps23 (sst6) of Schizosaccharomyces pombe (strain 972 / ATCC 24843) (Fission yeast).